A 335-amino-acid polypeptide reads, in one-letter code: Tetraacyldisaccharide 4'-kinase (335 aa).

58-65 (TAGGSGKT) provides a ligand contact to ATP.

The protein belongs to the LpxK family.

It catalyses the reaction a lipid A disaccharide + ATP = a lipid IVA + ADP + H(+). Its pathway is glycolipid biosynthesis; lipid IV(A) biosynthesis; lipid IV(A) from (3R)-3-hydroxytetradecanoyl-[acyl-carrier-protein] and UDP-N-acetyl-alpha-D-glucosamine: step 6/6. Transfers the gamma-phosphate of ATP to the 4'-position of a tetraacyldisaccharide 1-phosphate intermediate (termed DS-1-P) to form tetraacyldisaccharide 1,4'-bis-phosphate (lipid IVA). The protein is Tetraacyldisaccharide 4'-kinase of Shewanella frigidimarina (strain NCIMB 400).